The following is a 356-amino-acid chain: Holliday junction branch migration complex subunit RuvB (356 aa).

The interval 4–190 (TDKLAAERII…FGIVARLEFY (187 aa)) is large ATPase domain (RuvB-L). ATP is bound by residues Leu29, Arg30, Gly71, Lys74, Thr75, Thr76, 137 to 139 (EDY), Arg180, Tyr190, and Arg227. Position 75 (Thr75) interacts with Mg(2+). The segment at 191-261 (DAEQLSRIVR…VADAALAMLD (71 aa)) is small ATPAse domain (RuvB-S). The interval 264 to 356 (PVGFDLMDRK…NLWDTPDAER (93 aa)) is head domain (RuvB-H). The DNA site is built by Arg300, Arg319, and Arg324.

Belongs to the RuvB family. In terms of assembly, homohexamer. Forms an RuvA(8)-RuvB(12)-Holliday junction (HJ) complex. HJ DNA is sandwiched between 2 RuvA tetramers; dsDNA enters through RuvA and exits via RuvB. An RuvB hexamer assembles on each DNA strand where it exits the tetramer. Each RuvB hexamer is contacted by two RuvA subunits (via domain III) on 2 adjacent RuvB subunits; this complex drives branch migration. In the full resolvosome a probable DNA-RuvA(4)-RuvB(12)-RuvC(2) complex forms which resolves the HJ.

It localises to the cytoplasm. The catalysed reaction is ATP + H2O = ADP + phosphate + H(+). Functionally, the RuvA-RuvB-RuvC complex processes Holliday junction (HJ) DNA during genetic recombination and DNA repair, while the RuvA-RuvB complex plays an important role in the rescue of blocked DNA replication forks via replication fork reversal (RFR). RuvA specifically binds to HJ cruciform DNA, conferring on it an open structure. The RuvB hexamer acts as an ATP-dependent pump, pulling dsDNA into and through the RuvAB complex. RuvB forms 2 homohexamers on either side of HJ DNA bound by 1 or 2 RuvA tetramers; 4 subunits per hexamer contact DNA at a time. Coordinated motions by a converter formed by DNA-disengaged RuvB subunits stimulates ATP hydrolysis and nucleotide exchange. Immobilization of the converter enables RuvB to convert the ATP-contained energy into a lever motion, pulling 2 nucleotides of DNA out of the RuvA tetramer per ATP hydrolyzed, thus driving DNA branch migration. The RuvB motors rotate together with the DNA substrate, which together with the progressing nucleotide cycle form the mechanistic basis for DNA recombination by continuous HJ branch migration. Branch migration allows RuvC to scan DNA until it finds its consensus sequence, where it cleaves and resolves cruciform DNA. The polypeptide is Holliday junction branch migration complex subunit RuvB (Burkholderia thailandensis (strain ATCC 700388 / DSM 13276 / CCUG 48851 / CIP 106301 / E264)).